Here is a 110-residue protein sequence, read N- to C-terminus: Small EDRK-rich factor 1 (110 aa).

The span at 1–30 (MARGNQRELARQKNMKKTQEISKGKRKEDS) shows a compositional bias: basic and acidic residues. The disordered stretch occupies residues 1-61 (MARGNQRELA…GPHLPLKAPR (61 aa)). A required for SNCA binding region spans residues 11-17 (RQKNMKK). The segment covering 34-50 (SQRKQSSGGQKSESKMS) has biased composition (low complexity).

The protein belongs to the SERF family. Interacts with SNCA; this interaction promotes the aggregation of SNCA. Isoform Long is predominantly expressed in heart, brain and skeletal muscle. Isoform Short and Isoform Long are expressed throughout the central nervous system, including spinal cord.

It localises to the cytoplasm. Its subcellular location is the cytosol. The protein localises to the nucleus. Its function is as follows. Positive regulator of amyloid protein aggregation and proteotoxicity. Induces conformational changes in amyloid proteins, such as APP, HTT, and SNCA, driving them into compact formations preceding the formation of aggregates. The protein is Small EDRK-rich factor 1 (SERF1A) of Homo sapiens (Human).